Reading from the N-terminus, the 468-residue chain is A-type ATP synthase subunit B (468 aa).

The protein belongs to the ATPase alpha/beta chains family. As to quaternary structure, has multiple subunits with at least A(3), B(3), C, D, E, F, H, I and proteolipid K(x).

It localises to the cell membrane. Component of the A-type ATP synthase that produces ATP from ADP in the presence of a proton gradient across the membrane. The B chain is a regulatory subunit. This chain is A-type ATP synthase subunit B, found in Haloferax volcanii (strain ATCC 29605 / DSM 3757 / JCM 8879 / NBRC 14742 / NCIMB 2012 / VKM B-1768 / DS2) (Halobacterium volcanii).